We begin with the raw amino-acid sequence, 85 residues long: Exodeoxyribonuclease 7 small subunit (85 aa).

This sequence belongs to the XseB family. Heterooligomer composed of large and small subunits.

Its subcellular location is the cytoplasm. The enzyme catalyses Exonucleolytic cleavage in either 5'- to 3'- or 3'- to 5'-direction to yield nucleoside 5'-phosphates.. Bidirectionally degrades single-stranded DNA into large acid-insoluble oligonucleotides, which are then degraded further into small acid-soluble oligonucleotides. The protein is Exodeoxyribonuclease 7 small subunit of Mycobacterium bovis (strain ATCC BAA-935 / AF2122/97).